The following is a 161-amino-acid chain: DNA-directed RNA polymerase III subunit RPC9 (161 aa).

The tract at residues 75–96 is disordered; sequence QEDEGEERESSGAKDAEKSGIS. Residues 82-96 show a composition bias toward basic and acidic residues; the sequence is RESSGAKDAEKSGIS.

This sequence belongs to the eukaryotic RPC9 RNA polymerase subunit family. Component of the RNA polymerase III (Pol III) complex consisting of 17 subunits. Forms a Pol III subcomplex with RPC25/RPC8. Interacts with BURF1/TDS4.

Its subcellular location is the nucleus. Functionally, DNA-dependent RNA polymerase catalyzes the transcription of DNA into RNA using the four ribonucleoside triphosphates as substrates. Specific peripheric component of RNA polymerase III which synthesizes small RNAs, such as 5S rRNA and tRNAs. The RPC25/RPC8-RPC17/RPC9 subcomplex may bind Pol III transcripts emerging from the adjacent exit pore during elongation. The protein is DNA-directed RNA polymerase III subunit RPC9 (RPC17) of Saccharomyces cerevisiae (strain ATCC 204508 / S288c) (Baker's yeast).